Reading from the N-terminus, the 273-residue chain is Formamidopyrimidine-DNA glycosylase (273 aa).

The active-site Schiff-base intermediate with DNA is the P2. The active-site Proton donor is the E3. The active-site Proton donor; for beta-elimination activity is the K60. DNA is bound by residues H94, R113, and K154. Residues 239–273 form an FPG-type zinc finger; the sequence is EAYGRTGEPCRRCGTPIERIVVAQRSTHICPVCQA. Residue R263 is the Proton donor; for delta-elimination activity of the active site.

This sequence belongs to the FPG family. Monomer. Requires Zn(2+) as cofactor.

It catalyses the reaction Hydrolysis of DNA containing ring-opened 7-methylguanine residues, releasing 2,6-diamino-4-hydroxy-5-(N-methyl)formamidopyrimidine.. It carries out the reaction 2'-deoxyribonucleotide-(2'-deoxyribose 5'-phosphate)-2'-deoxyribonucleotide-DNA = a 3'-end 2'-deoxyribonucleotide-(2,3-dehydro-2,3-deoxyribose 5'-phosphate)-DNA + a 5'-end 5'-phospho-2'-deoxyribonucleoside-DNA + H(+). In terms of biological role, involved in base excision repair of DNA damaged by oxidation or by mutagenic agents. Acts as a DNA glycosylase that recognizes and removes damaged bases. Has a preference for oxidized purines, such as 7,8-dihydro-8-oxoguanine (8-oxoG). Has AP (apurinic/apyrimidinic) lyase activity and introduces nicks in the DNA strand. Cleaves the DNA backbone by beta-delta elimination to generate a single-strand break at the site of the removed base with both 3'- and 5'-phosphates. The polypeptide is Formamidopyrimidine-DNA glycosylase (Herpetosiphon aurantiacus (strain ATCC 23779 / DSM 785 / 114-95)).